We begin with the raw amino-acid sequence, 332 residues long: Glycerol-3-phosphate dehydrogenase [NAD(P)+] (332 aa).

Residues Ser11, Trp12, Arg32, Arg33, and Lys106 each contribute to the NADPH site. The sn-glycerol 3-phosphate site is built by Lys106 and Gly136. Ala140 is a binding site for NADPH. Lys191, Asp244, Ser254, Arg255, and Asn256 together coordinate sn-glycerol 3-phosphate. Lys191 functions as the Proton acceptor in the catalytic mechanism. Arg255 lines the NADPH pocket. Residues Val280 and Glu282 each coordinate NADPH.

It belongs to the NAD-dependent glycerol-3-phosphate dehydrogenase family.

It localises to the cytoplasm. It carries out the reaction sn-glycerol 3-phosphate + NAD(+) = dihydroxyacetone phosphate + NADH + H(+). It catalyses the reaction sn-glycerol 3-phosphate + NADP(+) = dihydroxyacetone phosphate + NADPH + H(+). It functions in the pathway membrane lipid metabolism; glycerophospholipid metabolism. In terms of biological role, catalyzes the reduction of the glycolytic intermediate dihydroxyacetone phosphate (DHAP) to sn-glycerol 3-phosphate (G3P), the key precursor for phospholipid synthesis. In Corynebacterium glutamicum (strain R), this protein is Glycerol-3-phosphate dehydrogenase [NAD(P)+].